Consider the following 589-residue polypeptide: Ubiquilin-1 (589 aa).

Over residues 1–11 (MAESGESGGPP) the composition is skewed to gly residues. 2 disordered regions span residues 1–35 (MAES…AEPK) and 110–145 (NRPQ…ATSN). At A2 the chain carries N-acetylalanine. The span at 12-35 (GSQDSAAGAEGAGAPAAAASAEPK) shows a compositional bias: low complexity. Residues 37 to 111 (MKVTVKTPKE…VHLVIKTQNR (75 aa)) enclose the Ubiquitin-like domain. Residues 110-124 (NRPQDHSAQQTNTAG) show a composition bias toward polar residues. A compositionally biased stretch (low complexity) spans 125–145 (SNVTTSSTPNSNSTSGSATSN). Residues 178 to 428 (QLLSNPEMMV…LNNPLFAGNP (251 aa)) are interaction with UBXN4. STI1 domains are found at residues 182-210 (NPEM…QLIM) and 212-251 (NPQM…MQEM). The disordered stretch occupies residues 295-371 (PFASLVSNTS…NLVPGVGASM (77 aa)). Residues 299 to 313 (LVSNTSSGEGSQPSR) show a composition bias toward polar residues. The segment covering 327 to 360 (QTSQSSSASSGTASTVGGTTGSTASGTSGQSTTA) has biased composition (low complexity). 2 STI1 domains span residues 387-434 (NPQL…QEQM) and 438-470 (LPTF…QQGL). A disordered region spans residues 488 to 520 (LGALGSTGGSSGTNGSNATPSENTSPTAGTTEP). Over residues 489-499 (GALGSTGGSSG) the composition is skewed to gly residues. Over residues 509–520 (ENTSPTAGTTEP) the composition is skewed to polar residues. The region spanning 546–586 (RFQQQLEQLSAMGFLNREANLQALIATGGDINAAIERLLGS) is the UBA domain.

Monomer and homodimer. Heterodimer with UBQLN2. Binds CD47, NBL1, GABRA1, GABRA2, GABRA3, GABRA6, GABRB1, GABRB2 and GABRB3. Binds UBE3A, BTRC, P4HB and MTOR. Interacts with the proteasome 19S subunit. Interacts (via ubiquitin-like domain) with TREX1; the interaction is direct and may control TREX1 subcellular location. Forms a complex with UBXN4 and VCP. Interacts (via UBA domain) with UBQLN4 (via ubiquitin-like domain). Found in a complex with UBQLN2 and MAP1LC3A/B/C. The monomeric form interacts with PSEN2. The monomeric form interacts with PSEN1. Interacts with ORAI1. Interacts (via UBA domain) with TICAM1. Interacts with EPS15. Interacts (via UBA domain) with UBA52 and (via ubiquitin-like domain) with PSMD3 and PSMD4. Interacts with HERPUD1. Interacts with MAP1LC3A/B/C in the presence of UBQLN4. Interacts (via ubiquitin-like domain) with EPS15 (via UIM domains) and both the ubiquitinated and non-ubiquitinated forms can interact with EPS15. Interacts (via ubiquitin-like domain) with EPS15L1, HGS (via UIM domain) and STAM2 (via UIM domain). Interacts with BCL2L10/BCL-B; in the cytoplasm. In terms of assembly, monomeric form interacts with PSEN1. Post-translationally, degraded during both macroautophagy and during chaperone-mediated autophagy (CMA). In terms of processing, phosphorylated. Ubiquitinated. Brain (at protein level). Ubiquitous. Highly expressed throughout the brain; detected in neurons and in neuropathological lesions, such as neurofibrillary tangles and Lewy bodies. Highly expressed in heart, placenta, pancreas, lung, liver, skeletal muscle and kidney.

The protein localises to the cytoplasm. Its subcellular location is the nucleus. It localises to the endoplasmic reticulum. It is found in the cytoplasmic vesicle. The protein resides in the autophagosome. The protein localises to the cell membrane. Plays an important role in the regulation of different protein degradation mechanisms and pathways including ubiquitin-proteasome system (UPS), autophagy and endoplasmic reticulum-associated protein degradation (ERAD) pathway. Mediates the proteasomal targeting of misfolded or accumulated proteins for degradation by binding (via UBA domain) to their polyubiquitin chains and by interacting (via ubiquitin-like domain) with the subunits of the proteasome. Plays a role in the ERAD pathway via its interaction with ER-localized proteins UBXN4, VCP and HERPUD1 and may form a link between the polyubiquitinated ERAD substrates and the proteasome. Involved in the regulation of macroautophagy and autophagosome formation; required for maturation of autophagy-related protein LC3 from the cytosolic form LC3-I to the membrane-bound form LC3-II and may assist in the maturation of autophagosomes to autolysosomes by mediating autophagosome-lysosome fusion. Negatively regulates the TICAM1/TRIF-dependent toll-like receptor signaling pathway by decreasing the abundance of TICAM1 via the autophagic pathway. Promotes the ubiquitination and lysosomal degradation of ORAI1, consequently down-regulating the ORAI1-mediated Ca2+ mobilization. Suppresses the maturation and proteasomal degradation of amyloid beta A4 protein (A4) by stimulating the lysine 63 (K63)-linked polyubiquitination. Delays the maturation of A4 by sequestering it in the Golgi apparatus and preventing its transport to the cell surface for subsequent processing. Ubiquitinates BCL2L10 and thereby stabilizes protein abundance. Functionally, plays a role in unfolded protein response (UPR) by attenuating the induction of UPR-inducible genes, DDTI3/CHOP, HSPA5 and PDIA2 during ER stress. Plays a key role in the regulation of the levels of PSEN1 by targeting its accumulation to aggresomes which may then be removed from cells by autophagocytosis. In terms of biological role, plays a role in unfolded protein response (UPR) by attenuating the induction of UPR-inducible genes, DDTI3/CHOP, HSPA5 and PDIA2 during ER stress. The protein is Ubiquilin-1 (UBQLN1) of Homo sapiens (Human).